The chain runs to 320 residues: Acyl-coenzyme A thioesterase 8 (320 aa).

Active-site charge relay system residues include Asp233, Ser255, and Gln305. Positions 318-320 match the Microbody targeting signal motif; it reads SKL.

The protein belongs to the C/M/P thioester hydrolase family. Homodimer.

Its subcellular location is the peroxisome matrix. The enzyme catalyses choloyl-CoA + H2O = cholate + CoA + H(+). It carries out the reaction chenodeoxycholoyl-CoA + H2O = chenodeoxycholate + CoA + H(+). It catalyses the reaction acetyl-CoA + H2O = acetate + CoA + H(+). The catalysed reaction is butanoyl-CoA + H2O = butanoate + CoA + H(+). The enzyme catalyses hexanoyl-CoA + H2O = hexanoate + CoA + H(+). It carries out the reaction octanoyl-CoA + H2O = octanoate + CoA + H(+). It catalyses the reaction decanoyl-CoA + H2O = decanoate + CoA + H(+). The catalysed reaction is dodecanoyl-CoA + H2O = dodecanoate + CoA + H(+). The enzyme catalyses tetradecanoyl-CoA + H2O = tetradecanoate + CoA + H(+). It carries out the reaction 4,8-dimethylnonanoyl-CoA + H2O = 4,8-dimethylnonanoate + CoA + H(+). It catalyses the reaction 2,6-dimethylheptanoyl-CoA + H2O = 2,6-dimethylheptanoate + CoA + H(+). The catalysed reaction is malonyl-CoA + H2O = malonate + CoA + H(+). The enzyme catalyses acetoacetyl-CoA + H2O = acetoacetate + CoA + H(+). It carries out the reaction propanoyl-CoA + H2O = propanoate + CoA + H(+). It catalyses the reaction succinyl-CoA + H2O = succinate + CoA + H(+). The catalysed reaction is glutaryl-CoA + H2O = glutarate + CoA + H(+). The enzyme catalyses hexanedioyl-CoA + H2O = hexanedioate + CoA + H(+). It carries out the reaction octanedioyl-CoA + H2O = octanedioate + CoA + H(+). It catalyses the reaction decanedioyl-CoA + H2O = decanedioate + CoA + H(+). The catalysed reaction is dodecanedioyl-CoA + H2O = dodecanedioate + CoA + H(+). The enzyme catalyses (9Z)-tetradecenoyl-CoA + H2O = (9Z)-tetradecenoate + CoA + H(+). It carries out the reaction hexadecanoyl-CoA + H2O = hexadecanoate + CoA + H(+). It catalyses the reaction (9Z)-hexadecenoyl-CoA + H2O = (9Z)-hexadecenoate + CoA + H(+). The catalysed reaction is octadecanoyl-CoA + H2O = octadecanoate + CoA + H(+). The enzyme catalyses (9Z)-octadecenoyl-CoA + H2O = (9Z)-octadecenoate + CoA + H(+). It carries out the reaction (9Z,12Z)-octadecadienoyl-CoA + H2O = (9Z,12Z)-octadecadienoate + CoA + H(+). It catalyses the reaction eicosanoyl-CoA + H2O = eicosanoate + CoA + H(+). The catalysed reaction is (5Z,8Z,11Z,14Z)-eicosatetraenoyl-CoA + H2O = (5Z,8Z,11Z,14Z)-eicosatetraenoate + CoA + H(+). The enzyme catalyses (3S)-3-hydroxy-3-methylglutaryl-CoA + H2O = 3-hydroxy-3-methylglutarate + CoA + H(+). It carries out the reaction 3alpha,7alpha,12alpha-trihydroxy-5beta-cholestan-26-oyl-CoA + H2O = 3alpha,7alpha,12alpha-trihydroxy-5beta-cholestan-26-oate + CoA + H(+). It catalyses the reaction 2-methyloctadecanoyl-CoA + H2O = 2-methyloctadecanoate + CoA + H(+). The catalysed reaction is prostaglandin F2alpha-CoA + H2O = prostaglandin F2alpha + CoA + H(+). With respect to regulation, inhibited by CoASH (IC(50)=10-15 uM). Also inhibited by cysteine-reactive agents. Its function is as follows. Catalyzes the hydrolysis of acyl-CoAs into free fatty acids and coenzyme A (CoASH), regulating their respective intracellular levels. Displays no strong substrate specificity with respect to the carboxylic acid moiety of Acyl-CoAs. Hydrolyzes medium length (C2 to C20) straight-chain, saturated and unsaturated acyl-CoAS but is inactive towards substrates with longer aliphatic chains. Moreover, it catalyzes the hydrolysis of CoA esters of bile acids, such as choloyl-CoA and chenodeoxycholoyl-CoA and competes with bile acid CoA:amino acid N-acyltransferase (BAAT). Is also able to hydrolyze CoA esters of dicarboxylic acids. It is involved in the metabolic regulation of peroxisome proliferation. The protein is Acyl-coenzyme A thioesterase 8 (Acot8) of Rattus norvegicus (Rat).